Here is a 161-residue protein sequence, read N- to C-terminus: Nucleoside diphosphate kinase (161 aa).

ATP contacts are provided by Lys-13, Phe-61, Arg-89, Thr-95, Arg-106, and Asn-116. The active-site Pros-phosphohistidine intermediate is the His-119.

This sequence belongs to the NDK family. The cofactor is Mg(2+).

It is found in the cytoplasm. The enzyme catalyses a 2'-deoxyribonucleoside 5'-diphosphate + ATP = a 2'-deoxyribonucleoside 5'-triphosphate + ADP. It carries out the reaction a ribonucleoside 5'-diphosphate + ATP = a ribonucleoside 5'-triphosphate + ADP. Its function is as follows. Major role in the synthesis of nucleoside triphosphates other than ATP. The ATP gamma phosphate is transferred to the NDP beta phosphate via a ping-pong mechanism, using a phosphorylated active-site intermediate. The sequence is that of Nucleoside diphosphate kinase from Halobacterium salinarum (strain ATCC 29341 / DSM 671 / R1).